Reading from the N-terminus, the 589-residue chain is Transmembrane 9 superfamily member 1 (589 aa).

An N-terminal signal peptide occupies residues methionine 1–glycine 27. N-linked (GlcNAc...) asparagine glycosylation occurs at asparagine 178. The next 4 helical transmembrane spans lie at leucine 237–leucine 257, valine 310–leucine 330, glycine 339–valine 359, and valine 373–valine 393. Asparagine 401 is a glycosylation site (N-linked (GlcNAc...) asparagine). 3 helical membrane passes run isoleucine 412–isoleucine 432, glycine 482–leucine 502, and serine 518–alanine 538. An N-linked (GlcNAc...) asparagine glycan is attached at asparagine 542. The chain crosses the membrane as a helical span at residues phenylalanine 552–phenylalanine 572.

Belongs to the nonaspanin (TM9SF) (TC 9.A.2) family.

The protein localises to the lysosome membrane. It localises to the cytoplasmic vesicle. The protein resides in the autophagosome membrane. Plays an essential role in autophagy. The sequence is that of Transmembrane 9 superfamily member 1 (Tm9sf1) from Rattus norvegicus (Rat).